Here is a 377-residue protein sequence, read N- to C-terminus: 3-dehydroquinate synthase (377 aa).

NAD(+) contacts are provided by residues 115–119, 139–140, Lys152, and Lys161; these read GVIGD and TS. Residues Glu194, His256, and His275 each coordinate Zn(2+).

This sequence belongs to the sugar phosphate cyclases superfamily. Dehydroquinate synthase family. Co(2+) serves as cofactor. Requires Zn(2+) as cofactor. The cofactor is NAD(+).

It is found in the cytoplasm. It catalyses the reaction 7-phospho-2-dehydro-3-deoxy-D-arabino-heptonate = 3-dehydroquinate + phosphate. Its pathway is metabolic intermediate biosynthesis; chorismate biosynthesis; chorismate from D-erythrose 4-phosphate and phosphoenolpyruvate: step 2/7. Catalyzes the conversion of 3-deoxy-D-arabino-heptulosonate 7-phosphate (DAHP) to dehydroquinate (DHQ). This is 3-dehydroquinate synthase from Rhizobium rhizogenes (strain K84 / ATCC BAA-868) (Agrobacterium radiobacter).